A 305-amino-acid chain; its full sequence is Ribonucleoside-diphosphate reductase small subunit (305 aa).

The Fe cation site is built by Glu-64, Glu-94, and His-97. Residue Tyr-101 is part of the active site. Residues 150-170 form a helical membrane-spanning segment; the sequence is VLIFYLIEGVFFISSFYCIGL. Fe cation is bound by residues Glu-157, Glu-191, and His-194.

This sequence belongs to the ribonucleoside diphosphate reductase small chain family. Heterotetramer composed of a homodimer of the large subunit (R1) and a homodimer of the small subunit (R2). Larger multisubunit protein complex are also active, composed of (R1)n(R2)n. Fe cation serves as cofactor.

Its subcellular location is the host membrane. It carries out the reaction a 2'-deoxyribonucleoside 5'-diphosphate + [thioredoxin]-disulfide + H2O = a ribonucleoside 5'-diphosphate + [thioredoxin]-dithiol. In terms of biological role, ribonucleoside-diphosphate reductase holoenzyme provides the precursors necessary for viral DNA synthesis. Allows virus growth in non-dividing cells, as well as reactivation from latency in infected hosts. Catalyzes the biosynthesis of deoxyribonucleotides from the corresponding ribonucleotides. The protein is Ribonucleoside-diphosphate reductase small subunit of Alcelaphine herpesvirus 1 (strain C500) (AlHV-1).